We begin with the raw amino-acid sequence, 104 residues long: Protein P3 (104 aa).

Residues 77-99 (LVFGVPQKTLLLGFGGLLVLGLV) traverse the membrane as a helical segment.

As to quaternary structure, homodimer.

The protein localises to the virion membrane. This chain is Protein P3 (III), found in Pseudoalteromonas phage PM2 (Bacteriophage PM2).